Consider the following 102-residue polypeptide: Small ribosomal subunit protein uS10 (102 aa).

The protein belongs to the universal ribosomal protein uS10 family. As to quaternary structure, part of the 30S ribosomal subunit.

Functionally, involved in the binding of tRNA to the ribosomes. The chain is Small ribosomal subunit protein uS10 from Streptococcus thermophilus (strain CNRZ 1066).